The chain runs to 603 residues: Probable L-gulonolactone oxidase 6 (603 aa).

Positions 1 to 35 (MAFTSSPSYGSLNAAFWRTIFVVHCISTLVFTTIS) are cleaved as a signal peptide. An FAD-binding PCMH-type domain is found at 64-246 (STCRAANVAY…SQVTLKLQPM (183 aa)).

Belongs to the oxygen-dependent FAD-linked oxidoreductase family. It depends on FAD as a cofactor.

It carries out the reaction L-gulono-1,4-lactone + O2 = L-ascorbate + H2O2 + H(+). The protein operates within cofactor biosynthesis; L-ascorbate biosynthesis. May be involved in the biosynthesis of ascorbic acid. The sequence is that of Probable L-gulonolactone oxidase 6 from Arabidopsis thaliana (Mouse-ear cress).